The following is a 348-amino-acid chain: tRNA N6-adenosine threonylcarbamoyltransferase (348 aa).

Fe cation is bound by residues His-116 and His-120. Substrate is bound by residues 138 to 142 (IISGG), Asp-171, Gly-184, and Asn-282. Asp-310 is a Fe cation binding site.

It belongs to the KAE1 / TsaD family. Requires Fe(2+) as cofactor.

The protein resides in the cytoplasm. The catalysed reaction is L-threonylcarbamoyladenylate + adenosine(37) in tRNA = N(6)-L-threonylcarbamoyladenosine(37) in tRNA + AMP + H(+). Required for the formation of a threonylcarbamoyl group on adenosine at position 37 (t(6)A37) in tRNAs that read codons beginning with adenine. Is involved in the transfer of the threonylcarbamoyl moiety of threonylcarbamoyl-AMP (TC-AMP) to the N6 group of A37, together with TsaE and TsaB. TsaD likely plays a direct catalytic role in this reaction. This is tRNA N6-adenosine threonylcarbamoyltransferase from Ehrlichia ruminantium (strain Welgevonden).